Consider the following 697-residue polypeptide: Probable potassium transporter 4 (697 aa).

The Cytoplasmic portion of the chain corresponds to 1 to 29; that stretch reads MSSSHTVTVSMDVEAGQKNKDKKGISQDL. The chain crosses the membrane as a helical span at residues 30–50; that stretch reads ILAYKTLGVVFGGLVTSPLYV. The Extracellular segment spans residues 51–66; it reads YPSMNLTNPTEEDYLG. Residue asparagine 55 is glycosylated (N-linked (GlcNAc...) asparagine). Residues 67–87 traverse the membrane as a helical segment; it reads IYSIMFWTLTLIGVVKYICIA. Residues 88–152 are Cytoplasmic-facing; the sequence is LNADDHGEGG…FIESSIIARR (65 aa). A helical membrane pass occupies residues 153 to 173; sequence LLLLTAILGMCMLIGDGILTP. The Extracellular segment spans residues 174 to 189; that stretch reads AISVLSAIDGLRGPFP. A helical transmembrane segment spans residues 190 to 210; the sequence is SVSKPAVEGLSAAILVGLFLL. Over 211–217 the chain is Cytoplasmic; sequence QKYGTSK. Residues 218-238 form a helical membrane-spanning segment; that stretch reads VSFMFSPIMAAWTFATPVIGV. Residues 239 to 271 lie on the Extracellular side of the membrane; it reads YSIWRYYPGIFKAMSPHYIVRFFMTNQTRGWQL. N-linked (GlcNAc...) asparagine glycosylation occurs at asparagine 264. The helical transmembrane segment at 272-292 threads the bilayer; it reads LGGTVLCITGAEAMFADLGHF. The Cytoplasmic portion of the chain corresponds to 293 to 300; that stretch reads SKRSIQIA. The chain crosses the membrane as a helical span at residues 301 to 321; sequence FMSSIYPSLVLTYAGQTAYLI. Over 322 to 338 the chain is Extracellular; it reads NNVDDFSDGFYKFVPRP. The helical transmembrane segment at 339-359 threads the bilayer; that stretch reads VYWPMFIIATLAAIVASQSLI. Residues 360 to 390 are Cytoplasmic-facing; the sequence is SATFSVIKQSVVLDYFPRVKVVHTSKDKEGE. A helical membrane pass occupies residues 391-411; sequence VYSPETNYMLMLLCVGVILGF. The Extracellular portion of the chain corresponds to 412 to 422; it reads GDGKDIGNAFG. Residues 423-443 form a helical membrane-spanning segment; sequence VVVILVMLITTILLTLVMLII. At 444–447 the chain is on the cytoplasmic side; that stretch reads WGTH. A helical transmembrane segment spans residues 448-468; sequence VVLVALYLVPFLLLEATYVSA. The Extracellular segment spans residues 469–475; sequence VCTKILR. The chain crosses the membrane as a helical span at residues 476 to 496; the sequence is GGWVPFAVSVALAAVMFGWYY. Topologically, residues 497–697 are cytoplasmic; sequence GRQRKTEYEA…RVEIGMLYKA (201 aa).

This sequence belongs to the HAK/KUP transporter (TC 2.A.72.3) family.

The protein resides in the membrane. Functionally, high-affinity potassium transporter. The polypeptide is Probable potassium transporter 4 (HAK4) (Oryza sativa subsp. japonica (Rice)).